Reading from the N-terminus, the 415-residue chain is Nacrein-like protein F (415 aa).

An N-linked (GlcNAc...) asparagine glycan is attached at Asn-27. Residues 33–414 (AGFSYDRSIC…KNKVTVYKSF (382 aa)) form the Alpha-carbonic anhydrase domain. His-132, His-134, and His-157 together coordinate Zn(2+). Residues 201–297 (DEPDDEECKH…GENGHKHGCR (97 aa)) are disordered. Over residues 207–219 (ECKHILKGHHPDN) the composition is skewed to basic and acidic residues. Residues 220-289 (NENGNGDNGN…NNGENGNNGE (70 aa)) are compositionally biased toward low complexity. Repeat copies occupy residues 225 to 227 (GDN), 228 to 230 (GNN), 231 to 233 (GYN), 234 to 236 (GDN), 237 to 239 (GNN), 240 to 242 (GDN), 243 to 245 (GNN), 246 to 248 (GYN), 249 to 251 (GDN), 252 to 254 (GNN), 255 to 257 (GVN), 258 to 260 (GNN), 261 to 263 (GYN), 264 to 266 (GDN), 267 to 269 (GNN), 270 to 272 (GDN), 273 to 275 (GNN), 276 to 278 (GEN), 279 to 281 (GNN), 282 to 284 (GEN), 285 to 286 (GN), and 288 to 290 (GEN). The interval 225-290 (GDNGNNGYNG…NGENGNNGEN (66 aa)) is 22 X 3 AA approximate tandem repeats of G-X-N. Residue 355–356 (TT) coordinates substrate.

This sequence belongs to the alpha-carbonic anhydrase family. In terms of assembly, homooligomer; disulfide-linked. May also be disulfide-linked to insoluble organic matrix. It depends on Zn(2+) as a cofactor. In terms of tissue distribution, expressed in the mantle.

The protein localises to the secreted. Its subcellular location is the extracellular space. It is found in the extracellular matrix. The catalysed reaction is hydrogencarbonate + H(+) = CO2 + H2O. In terms of biological role, acts as a negative regulator for calcification in the shells of mollusks. May function both as a calcium concentrator and as a carbonic anhydrase required for production of carbonate ions, which are assembled to CaCO(3) at mineralization sites. Is important for shell formation in both the calcitic prismatic layer and the aragonitic nacreous layer. Shows inhibitory activity of crystal formation when present in free state but, when attached to the insoluble matrix, may regulate the form and size of aragonite crystal. The sequence is that of Nacrein-like protein F from Pinctada fucata (Akoya pearl oyster).